A 194-amino-acid polypeptide reads, in one-letter code: MKNIILASASERRQELLKRILEDFQIIVSDFDESSAPFKDNIPSYVMNLAEGKARSVSKKIMDQDSNLVIGCDTLVAFNNKVLGKPKDKKDAFEMLQALSGNEHEVYSGLAILDVKSNKIITDFVCTKVKFSKLTSLQIEKYINTGDSMDKAGAYGIQGKAGVFVENINGCYYNVVGLPLNKLNSMLMEMGVNL.

Aspartate 73 (proton acceptor) is an active-site residue.

This sequence belongs to the Maf family. YhdE subfamily. A divalent metal cation is required as a cofactor.

The protein resides in the cytoplasm. The catalysed reaction is dTTP + H2O = dTMP + diphosphate + H(+). The enzyme catalyses UTP + H2O = UMP + diphosphate + H(+). In terms of biological role, nucleoside triphosphate pyrophosphatase that hydrolyzes dTTP and UTP. May have a dual role in cell division arrest and in preventing the incorporation of modified nucleotides into cellular nucleic acids. This is dTTP/UTP pyrophosphatase from Clostridium botulinum (strain ATCC 19397 / Type A).